A 153-amino-acid polypeptide reads, in one-letter code: Succinate dehydrogenase assembly factor 2, mitochondrial (153 aa).

Belongs to the SDHAF2 family. In terms of assembly, interacts with the flavoprotein subunit within the SDH catalytic dimer.

It localises to the mitochondrion matrix. Its function is as follows. Plays an essential role in the assembly of succinate dehydrogenase (SDH), an enzyme complex (also referred to as respiratory complex II) that is a component of both the tricarboxylic acid (TCA) cycle and the mitochondrial electron transport chain, and which couples the oxidation of succinate to fumarate with the reduction of ubiquinone (coenzyme Q) to ubiquinol. Required for flavinylation (covalent attachment of FAD) of the flavoprotein subunit of the SDH catalytic dimer. The sequence is that of Succinate dehydrogenase assembly factor 2, mitochondrial from Candida glabrata (strain ATCC 2001 / BCRC 20586 / JCM 3761 / NBRC 0622 / NRRL Y-65 / CBS 138) (Yeast).